We begin with the raw amino-acid sequence, 161 residues long: Thy-1 membrane glycoprotein (161 aa).

Positions 1–19 (MNPVISITLLLSVLQMSRG) are cleaved as a signal peptide. At glutamine 20 the chain carries Pyrrolidone carboxylic acid. The Ig-like V-type domain occupies 20–126 (QRVISLTACL…NKTINVIRDK (107 aa)). 2 disulfides stabilise this stretch: cysteine 28/cysteine 130 and cysteine 38/cysteine 104. An N-linked (GlcNAc...) (complex) asparagine; alternate glycan is attached at asparagine 42. An N-linked (GlcNAc...) (high mannose) asparagine; alternate glycan is attached at asparagine 42. Asparagine 42 carries an N-linked (GlcNAc...) asparagine; alternate glycan. Serine 82 bears the Phosphoserine mark. Asparagine 93 carries an N-linked (GlcNAc...) (complex) asparagine; alternate glycan. Residue asparagine 93 is glycosylated (N-linked (GlcNAc...) asparagine; alternate). Residue asparagine 117 is glycosylated (N-linked (GlcNAc...) (high mannose) asparagine; in brain; alternate). The N-linked (GlcNAc...) (hybrid) asparagine; in brain; alternate glycan is linked to asparagine 117. A lipid anchor (GPI-anchor amidated cysteine) is attached at cysteine 130. A propeptide spans 131–161 (GGISLLVQNTSWLLLLLLSLSFLQATDFISL) (removed in mature form).

In terms of processing, glycosylation is tissue specific. Sialylation of N-glycans at Asn-93 in brain and at Asn-42, Asn-93 and Asn-117 in thymus. Abundant in lymphoid tissues.

The protein localises to the cell membrane. May play a role in cell-cell or cell-ligand interactions during synaptogenesis and other events in the brain. The protein is Thy-1 membrane glycoprotein (Thy1) of Rattus norvegicus (Rat).